The chain runs to 352 residues: Small ribosomal subunit biogenesis GTPase RsgA 1 (352 aa).

Residues 1–24 (MAKKKKLTQGQVRRVRDNQQKRLK) form a disordered region. Residues 104-272 (TSVLTRPDYY…LIDSPGVREF (169 aa)) enclose the CP-type G domain. GTP contacts are provided by residues 160–163 (NKID) and 214–222 (GQSGVGKSS). Residues cysteine 296, cysteine 301, histidine 303, and cysteine 309 each contribute to the Zn(2+) site.

The protein belongs to the TRAFAC class YlqF/YawG GTPase family. RsgA subfamily. Monomer. Associates with 30S ribosomal subunit, binds 16S rRNA. The cofactor is Zn(2+).

Its subcellular location is the cytoplasm. Functionally, one of several proteins that assist in the late maturation steps of the functional core of the 30S ribosomal subunit. Helps release RbfA from mature subunits. May play a role in the assembly of ribosomal proteins into the subunit. Circularly permuted GTPase that catalyzes slow GTP hydrolysis, GTPase activity is stimulated by the 30S ribosomal subunit. The polypeptide is Small ribosomal subunit biogenesis GTPase RsgA 1 (Vibrio vulnificus (strain CMCP6)).